Here is a 550-residue protein sequence, read N- to C-terminus: Calcyphosin-2 (550 aa).

Disordered regions lie at residues 1 to 20 and 175 to 198; these read MVPPLDLGSLVDSDEEDNFS and ISDPEQDLNTKNQESSRVPPDSER. Residues 181–190 are compositionally biased toward polar residues; that stretch reads DLNTKNQESS. EF-hand domains are found at residues 379 to 414, 415 to 452, and 453 to 488; these read RILTGLGRYFQGLDKEGNGLLEKADFQQALKTFHLE, VSEQDFESFWLILQGYGHSKNKVDYGEFKRAIFGEMNE, and YRKSFVRKAFMQLDFNKTGIVSVIDIRKCYCAKKHP. D466, N468, T470, and D477 together coordinate Ca(2+).

This chain is Calcyphosin-2 (Caps2), found in Mus musculus (Mouse).